A 377-amino-acid chain; its full sequence is Prolargin (377 aa).

Positions 1–21 (MRASFFWFLPLLLILASVAQG) are cleaved as a signal peptide. Positions 22–61 (QPRPKPGIRRKPKPRPTPSFPQPHEPAEPTDLPPPLPPGP) are disordered. Composition is skewed to pro residues over residues 36–45 (RPTPSFPQPH) and 52–61 (DLPPPLPPGP). 12 LRR repeats span residues 90–109 (RKVPIIPPRIHYLYLQNNFI), 110–133 (TELPVESFKNATGLRWINLDNNRI), 134–157 (RKVDQRVLEKLPGLAFLYMDKNQL), 158–178 (EEVPSALPRNLEQLRLSQNLI), 179–202 (SRIPPGVFSKLENLLLLDLQHNRL), 203–228 (SDGVFKADTFQGLKNLMQLNLAHNIL), 229–249 (RRMPPKVPPAIHQLYLDSNKI), 250–273 (ETIPSGYFKDFPNLAFIRMNYNKL), 274–298 (SDRGLPKNSFNISNLLVLHLSHNKI), 299–318 (SNVPAISNKLEHLYLNNNSI), 319–357 (EKINGTQICPSNLVAFHDFSSDLENVPHLRYLRLDGNFL), and 358–377 (KPPIPLDLMMCFRLLQSVVI). N-linked (GlcNAc...) asparagine glycosylation is present at Asn119. N-linked (GlcNAc...) asparagine glycosylation is found at Asn284, Asn315, and Asn322. Cys327 and Cys368 are disulfide-bonded.

This sequence belongs to the small leucine-rich proteoglycan (SLRP) family. SLRP class II subfamily. Binds the basement membrane heparan sulfate proteoglycan perlecan and triple helical collagens type I and type II. In terms of processing, glycosylated; contains heparan sulfate.

It is found in the secreted. The protein resides in the extracellular space. The protein localises to the extracellular matrix. May anchor basement membranes to the underlying connective tissue. This is Prolargin (Prelp) from Rattus norvegicus (Rat).